The chain runs to 864 residues: Sine oculis-binding protein homolog (864 aa).

Residues Met1 to Lys14 show a composition bias toward basic and acidic residues. Positions Met1 to Arg25 are disordered. 2 FCS-type zinc fingers span residues Asp142–Ala180 and Phe216–Asn256. 3 disordered regions span residues Leu304 to Ser360, Arg413 to Pro484, and Lys550 to Gly616. Composition is skewed to low complexity over residues Pro314–Ser335 and His417–Gly433. The segment covering Ile460 to Pro484 has biased composition (pro residues). Low complexity-rich tracts occupy residues Ser565–Leu582 and Gly590–Gly603. The SUMO interaction motif 1 (SIM); mediates the binding to polysumoylated substrates signature appears at Val618–Thr622. Ser627 is subject to Phosphoserine. The short motif at Val648–Thr652 is the SUMO interaction motif 2 (SIM); mediates the binding to polysumoylated substrates element. A Glycyl lysine isopeptide (Lys-Gly) (interchain with G-Cter in SUMO2) cross-link involves residue Lys672. Phosphoserine is present on Ser694. A disordered region spans residues Ala725–Ser750. Residues Glu733–Pro745 are compositionally biased toward pro residues.

The protein belongs to the SOBP family. In terms of assembly, interacts (via SIM domains) with SUMO1 and SUMO2.

In terms of biological role, implicated in development of the cochlea. This chain is Sine oculis-binding protein homolog, found in Rattus norvegicus (Rat).